Here is a 246-residue protein sequence, read N- to C-terminus: Pyridoxine 5'-phosphate synthase (246 aa).

3-amino-2-oxopropyl phosphate is bound at residue Asn-9. Position 11–12 (Asp-11–His-12) interacts with 1-deoxy-D-xylulose 5-phosphate. Arg-20 contacts 3-amino-2-oxopropyl phosphate. The active-site Proton acceptor is the His-45. Residues Arg-47 and His-52 each contribute to the 1-deoxy-D-xylulose 5-phosphate site. Glu-72 (proton acceptor) is an active-site residue. 1-deoxy-D-xylulose 5-phosphate is bound at residue Thr-102. His-193 (proton donor) is an active-site residue. Residues Gly-194 and Gly-215–His-216 each bind 3-amino-2-oxopropyl phosphate.

Belongs to the PNP synthase family. As to quaternary structure, homooctamer; tetramer of dimers.

Its subcellular location is the cytoplasm. It carries out the reaction 3-amino-2-oxopropyl phosphate + 1-deoxy-D-xylulose 5-phosphate = pyridoxine 5'-phosphate + phosphate + 2 H2O + H(+). The protein operates within cofactor biosynthesis; pyridoxine 5'-phosphate biosynthesis; pyridoxine 5'-phosphate from D-erythrose 4-phosphate: step 5/5. Its function is as follows. Catalyzes the complicated ring closure reaction between the two acyclic compounds 1-deoxy-D-xylulose-5-phosphate (DXP) and 3-amino-2-oxopropyl phosphate (1-amino-acetone-3-phosphate or AAP) to form pyridoxine 5'-phosphate (PNP) and inorganic phosphate. In Colwellia psychrerythraea (strain 34H / ATCC BAA-681) (Vibrio psychroerythus), this protein is Pyridoxine 5'-phosphate synthase.